Here is an 858-residue protein sequence, read N- to C-terminus: Beta-galactosidase 6 (858 aa).

The N-terminal stretch at 1-30 is a signal peptide; sequence MAAATVGVLLRLLLLPVVVVVSLLVGASRA. N-linked (GlcNAc...) asparagine glycosylation is present at asparagine 32. Glutamate 189 (proton donor) is an active-site residue. Residue glutamate 258 is the Nucleophile of the active site. N-linked (GlcNAc...) asparagine glycans are attached at residues asparagine 259, asparagine 482, asparagine 507, asparagine 595, and asparagine 830. Residues 772 to 858 form the SUEL-type lectin domain; that stretch reads QTQGPALRLE…KSLVVEAACS (87 aa).

This sequence belongs to the glycosyl hydrolase 35 family.

It is found in the secreted. It localises to the extracellular space. Its subcellular location is the apoplast. It catalyses the reaction Hydrolysis of terminal non-reducing beta-D-galactose residues in beta-D-galactosides.. In terms of biological role, releases galactose by hydrolysis of plant cell wall galactose-containing polysaccharides such as galacto-xyloglucan, pectic galactan and galactan (in vitro). This Oryza sativa subsp. japonica (Rice) protein is Beta-galactosidase 6.